A 492-amino-acid polypeptide reads, in one-letter code: Proline--tRNA ligase (492 aa).

Belongs to the class-II aminoacyl-tRNA synthetase family. ProS type 3 subfamily. Homodimer.

The protein localises to the cytoplasm. The catalysed reaction is tRNA(Pro) + L-proline + ATP = L-prolyl-tRNA(Pro) + AMP + diphosphate. Its function is as follows. Catalyzes the attachment of proline to tRNA(Pro) in a two-step reaction: proline is first activated by ATP to form Pro-AMP and then transferred to the acceptor end of tRNA(Pro). This is Proline--tRNA ligase from Flavobacterium johnsoniae (strain ATCC 17061 / DSM 2064 / JCM 8514 / BCRC 14874 / CCUG 350202 / NBRC 14942 / NCIMB 11054 / UW101) (Cytophaga johnsonae).